A 335-amino-acid polypeptide reads, in one-letter code: Polyprenol dehydrogenase (335 aa).

The NAD(+) site is built by Ile-55, Tyr-208, Lys-212, and Thr-245. The Proton acceptor role is filled by Tyr-208.

It belongs to the short-chain dehydrogenases/reductases (SDR) family.

Its subcellular location is the lipid droplet. The protein resides in the secreted. It carries out the reaction a di-trans,poly-cis-polyprenol + NAD(+) = a di-trans,poly-cis-polyprenal + NADH + H(+). It catalyses the reaction a di-trans,poly-cis-polyprenol + NADP(+) = a di-trans,poly-cis-polyprenal + NADPH + H(+). The enzyme catalyses a di-trans,poly-cis-dolichol + NADP(+) = a di-trans,poly-cis-dolichal + NADPH + H(+). The catalysed reaction is a di-trans,poly-cis-dolichol + NAD(+) = a di-trans,poly-cis-dolichal + NADH + H(+). The protein operates within protein modification; protein glycosylation. Oxidoreductase that plays a key role in early steps of protein N-linked glycosylation by mediating two non-consecutive steps in dolichol biosynthesis. Acts both as a NAD(+)-dependent dehydrogenase and as a NADPH-dependent reductase during the conversion of polyprenol into dolichol. First catalyzes the NAD(+)-dependent dehydrogenation of polyprenol into polyprenal; polyprenal is then reduced into dolichal by SRD5A3. It then catalyzes the NADPH-dependent reduction of dolichal into dolichol. May also acts as a positive regulator of starvation-induced autophagy. The chain is Polyprenol dehydrogenase (Dhrsx) from Mus musculus (Mouse).